A 183-amino-acid chain; its full sequence is Large ribosomal subunit protein uL5 (183 aa).

The protein belongs to the universal ribosomal protein uL5 family. As to quaternary structure, part of the 50S ribosomal subunit; part of the 5S rRNA/L5/L18/L25 subcomplex. Contacts the 5S rRNA and the P site tRNA. Forms a bridge to the 30S subunit in the 70S ribosome.

This is one of the proteins that bind and probably mediate the attachment of the 5S RNA into the large ribosomal subunit, where it forms part of the central protuberance. In the 70S ribosome it contacts protein S13 of the 30S subunit (bridge B1b), connecting the 2 subunits; this bridge is implicated in subunit movement. Contacts the P site tRNA; the 5S rRNA and some of its associated proteins might help stabilize positioning of ribosome-bound tRNAs. The protein is Large ribosomal subunit protein uL5 of Corynebacterium aurimucosum (strain ATCC 700975 / DSM 44827 / CIP 107346 / CN-1) (Corynebacterium nigricans).